Consider the following 454-residue polypeptide: Chromosomal replication initiator protein DnaA (454 aa).

A domain I, interacts with DnaA modulators region spans residues 1-81 (MNNSLWQQCA…PNVVLKVGEA (81 aa)). A disordered region spans residues 79 to 110 (GEASPTQRDSGSPQRAAATRRKTPNFSSGNTD). The domain II stretch occupies residues 81–117 (ASPTQRDSGSPQRAAATRRKTPNFSSGNTDVEVPFES). The span at 82-91 (SPTQRDSGSP) shows a compositional bias: polar residues. The segment at 118–334 (NIHPEYTFDN…GALNRVVANV (217 aa)) is domain III, AAA+ region. ATP is bound by residues glycine 162, glycine 164, lysine 165, and threonine 166. Positions 335 to 454 (QLTGRPITID…YRNLIRTLSS (120 aa)) are domain IV, binds dsDNA.

Belongs to the DnaA family. In terms of assembly, oligomerizes as a right-handed, spiral filament on DNA at oriC.

It localises to the cytoplasm. In terms of biological role, plays an essential role in the initiation and regulation of chromosomal replication. ATP-DnaA binds to the origin of replication (oriC) to initiate formation of the DNA replication initiation complex once per cell cycle. Binds the DnaA box (a 9 base pair repeat at the origin) and separates the double-stranded (ds)DNA. Forms a right-handed helical filament on oriC DNA; dsDNA binds to the exterior of the filament while single-stranded (ss)DNA is stabiized in the filament's interior. The ATP-DnaA-oriC complex binds and stabilizes one strand of the AT-rich DNA unwinding element (DUE), permitting loading of DNA polymerase. After initiation quickly degrades to an ADP-DnaA complex that is not apt for DNA replication. Binds acidic phospholipids. The chain is Chromosomal replication initiator protein DnaA from Idiomarina loihiensis (strain ATCC BAA-735 / DSM 15497 / L2-TR).